Consider the following 630-residue polypeptide: MALTSAASTDAPPTTGFWALTLGGVGVVFGDIGTSPLYAFREAVHVAAEGAQVTRVIVLGVLSLILWSLFIVVTAKYVLLLLRADNNGEGGTLSLMALGQRAIGRRSVFLMSLGVIGASMFIGDSMITPAISVLSAVEGLKIAAPALEHYVVPLTVGILVVLFAFQRWGTARVASAFGPVMIVWFSTLAVMGLIHINDDPSVLAAINPWHAVHFMLSHGMVGLVTIGAVFLAVTGGEALYADLGHFGRKPIQTGWLFFVLPSLLINYFGQGALVLSHPEAVENTFYRMVPESFLVPLIVLATAATVIASQAVITGAFSLISQAVQLGLLPRFEVRYTSETHAGQIYLPRVNMLLLIGVLMLVLLFRNSSGLASAYGIAVSTTMVADGVMGFVVIWKLWGWRPAAAAALIFPFVAVDAIFFSANLLKLLEGAWVPLLFGLLMATLIWVWRRGSAMLILKTRRTEVPLNDLIQSLEKRPPHIVKGTAVFLTSDPEYVPTALLHNLKHNKVLHEHNVILTIQTAQTPRVDPAERVTMENISDKFSKVRLRFGYMESPNVPKALVIARKLGWQFDIMSTSFFVSRRSLKPAAQSGLPRWQNHLFIALSRSANDATDYFQIPTGRVVEVGTQVTI.

12 helical membrane-spanning segments follow: residues 17 to 37, 56 to 76, 108 to 128, 145 to 165, 176 to 196, 214 to 234, 255 to 275, 293 to 313, 345 to 365, 375 to 395, 402 to 422, and 427 to 447; these read FWAL…TSPL, VIVL…VTAK, VFLM…SMIT, PALE…LFAF, AFGP…LIHI, FMLS…LAVT, WLFF…ALVL, FLVP…QAVI, IYLP…VLLF, YGIA…VVIW, PAAA…FFSA, and LLEG…LIWV.

This sequence belongs to the HAK/KUP transporter (TC 2.A.72) family.

It is found in the cell inner membrane. It carries out the reaction K(+)(in) + H(+)(in) = K(+)(out) + H(+)(out). Functionally, transport of potassium into the cell. Likely operates as a K(+):H(+) symporter. This Rhodopseudomonas palustris (strain BisB18) protein is Probable potassium transport system protein Kup 2.